The sequence spans 403 residues: Alkaline protease 1 (403 aa).

Positions M1 to A21 are cleaved as a signal peptide. A propeptide spanning residues P22–T125 is cleaved from the precursor. In terms of domain architecture, Inhibitor I9 spans K36–L120. Residues P130 to A403 form the Peptidase S8 domain. Residues D162 and H193 each act as charge relay system in the active site. 2 N-linked (GlcNAc...) asparagine glycosylation sites follow: N253 and N307. The active-site Charge relay system is S349.

The protein belongs to the peptidase S8 family.

Its subcellular location is the secreted. It carries out the reaction Hydrolysis of proteins with broad specificity, and of Bz-Arg-OEt &gt; Ac-Tyr-OEt. Does not hydrolyze peptide amides.. Its function is as follows. Secreted alkaline protease that allows assimilation of proteinaceous substrates. This chain is Alkaline protease 1 (alp1), found in Aspergillus clavatus (strain ATCC 1007 / CBS 513.65 / DSM 816 / NCTC 3887 / NRRL 1 / QM 1276 / 107).